The chain runs to 46 residues: uncharacterized protein (46 aa).

This is an uncharacterized protein from Escherichia coli (strain K12).